A 183-amino-acid chain; its full sequence is PLAT domain-containing protein 2 (183 aa).

An N-terminal signal peptide occupies residues 1–25 (MMPRRDVLFLSLLLVIATVSAVALA). The region spanning 31–158 (CVYTFFLRTG…SPYELSAVRN (128 aa)) is the PLAT domain.

Its subcellular location is the endoplasmic reticulum. Functionally, involved in response to abiotic stress. The sequence is that of PLAT domain-containing protein 2 from Arabidopsis thaliana (Mouse-ear cress).